Here is a 216-residue protein sequence, read N- to C-terminus: MNRQDLAVPLRLLGVSLLVFGLLYQGSLMAIGDAVFPNSSAGSPVYVDGQEQPVGSQMIGQQFRPGQPEDVQYFWSRPSANDYNAMTSASTNWGPTNPLLSERVRADLQNISQYETPDDSVPVNLVSESGSSYDAHISPAAAEYQVLRVANQTGISEQRLNEMIDEATKEPWLGIWGHERVNVLELNLMVRDALNEQNETDQNSDMNASEIANGDH.

Residues 12 to 32 (LLGVSLLVFGLLYQGSLMAIG) form a helical membrane-spanning segment. A compositionally biased stretch (polar residues) spans 197–207 (QNETDQNSDMN). The disordered stretch occupies residues 197 to 216 (QNETDQNSDMNASEIANGDH).

It belongs to the KdpC family. As to quaternary structure, the system is composed of three essential subunits: KdpA, KdpB and KdpC. The complex also contains KdpF, a small non-essential subunit.

The protein localises to the cell membrane. Part of the high-affinity ATP-driven potassium transport (or Kdp) system, which catalyzes the hydrolysis of ATP coupled with the electrogenic transport of potassium into the cytoplasm. This subunit acts as a catalytic chaperone that increases the ATP-binding affinity of the ATP-hydrolyzing subunit KdpB by the formation of a transient KdpB/KdpC/ATP ternary complex. The Kdp system is essential for growth under K(+) limitation, and for survival under desiccation and salt crystal inclusion. This Halobacterium salinarum (strain ATCC 29341 / DSM 671 / R1) protein is Potassium-transporting ATPase KdpC subunit.